The following is a 647-amino-acid chain: MNKHSGNRTAIDPAALEMSIASATEALLAYRHADGHWAFELEADSTIPSEYILLRHYLAEPIDVVLEAKIGNYLRRTQGAHGGWPLVHDGPFDMSASVKSYFALKMIGDSVDAAHMVKAREAIRARGGAANSNVLTRFLLALYGVVSWRAVPVLPIEIVLLPIWSPFHLYKISYWARTTIVPLMVLAVLKPRAKNPKGVGIEELFLQDTKSVGMNPKAPHQSWGWFLLFRGIDGILRVIEPHLPKKLRERAIASALAFTEERLNGEDGMGAIYPSMANIVMMYDALGKDDHFPPRAIARRAIDKLLVIGEEEAYCQPCLSPVWDTALTCHALQEVGGANAVAKAKQGLDWLKPRQVLDVKGDWAVKAPNIRPGGWPFQYNNAHYPDLDDTAVVVMAMDRAQRHAGSKEYATAIARGREWIEGMQSRDGGWAAFDVNNLEYYLNNLPFADHGALLDPPTEDVTARCVSMLAQVGEFTQRSKAVAEGIAYLRRTQHAEGSWYGRWGLNYIYGTWSVLCALNAAGIDHQDPMIRKAVEWLVSIQSWDGGWGEDAISYRLDYSGYEQAPSTSSQTAWALLGLMAAGEVEHPAVARGVNYLKNAQTENGLWDEQRYTATGFPRVFYLRYHGYSKFFPLWALARYRNLRSTNV.

The PFTB 1 repeat unit spans residues 67-108; sequence EAKIGNYLRRTQGAHGGWPLVHDGPFDMSASVKSYFALKMIG. The Proton donor role is filled by Asp388. 2 PFTB repeats span residues 413-454 and 530-577; these read IARG…GALL and IRKA…ALLG.

It belongs to the terpene cyclase/mutase family.

It carries out the reaction squalene = hop-22(29)-ene. The catalysed reaction is squalene + H2O = hopan-22-ol. The protein operates within secondary metabolite biosynthesis; hopanoid biosynthesis. In terms of biological role, catalyzes the cyclization of squalene into hopene. Probably part of an operon y4aABCD involved in the synthesis of an isoprenoid compound. In Sinorhizobium fredii (strain NBRC 101917 / NGR234), this protein is Probable squalene--hopene cyclase (shc).